A 571-amino-acid polypeptide reads, in one-letter code: Hemagglutinin-neuraminidase (571 aa).

Over 1 to 25 (MEDYSNLSLKSIPKRTCRIIFRTAT) the chain is Intravirion. The helical transmembrane segment at 26-46 (ILGICTLIVLCSSILHEIIHL) threads the bilayer. Over 47-571 (DVSSGLMDSD…IIPFLRELIP (525 aa)) the chain is Virion surface. 3 cysteine pairs are disulfide-bonded: Cys-166–Cys-190, Cys-180–Cys-241, and Cys-232–Cys-245. An involved in neuraminidase activity region spans residues 228-233 (NRKSCS). N-linked (GlcNAc...) asparagine; by host glycosylation is found at Asn-272, Asn-284, and Asn-335. Disulfide bonds link Cys-338/Cys-459, Cys-370/Cys-380, and Cys-453/Cys-463. Residues Asn-386, Asn-454, Asn-498, Asn-501, Asn-517, and Asn-522 are each glycosylated (N-linked (GlcNAc...) asparagine; by host). An intrachain disulfide couples Cys-535 to Cys-546.

The protein belongs to the paramyxoviruses hemagglutinin-neuraminidase family. In terms of assembly, homotetramer; composed of disulfide-linked homodimers. Interacts with F protein trimer.

It is found in the virion membrane. Its subcellular location is the host cell membrane. It catalyses the reaction Hydrolysis of alpha-(2-&gt;3)-, alpha-(2-&gt;6)-, alpha-(2-&gt;8)- glycosidic linkages of terminal sialic acid residues in oligosaccharides, glycoproteins, glycolipids, colominic acid and synthetic substrates.. In terms of biological role, attaches the virus to sialic acid-containing cell receptors and thereby initiating infection. Binding of HN protein to the receptor induces a conformational change that allows the F protein to trigger virion/cell membranes fusion. Functionally, neuraminidase activity ensures the efficient spread of the virus by dissociating the mature virions from the neuraminic acid containing glycoproteins. The polypeptide is Hemagglutinin-neuraminidase (HN) (Homo sapiens (Human)).